Here is a 369-residue protein sequence, read N- to C-terminus: Transmembrane protein 198 (369 aa).

Transmembrane regions (helical) follow at residues 37-57 (VVPSVVCSMCCLFGIIYCFFG), 60-80 (CFKAVLFLTGLMFGSVIIFLL), 93-113 (VEASVGIGLGIGTLCGLVTML), 117-137 (VGLFMVGLLLGLLVGIGTLIG), 148-168 (SVWVPLGVLLGLGMLFAVLTL), 181-201 (VFGAAVIVVATDYFVELFALV), and 216-236 (VCWTTWVVLGAWPALALLGVL). The disordered stretch occupies residues 266–308 (RQKEERRESSRKKKRKQPQSAQHTHAAKALHPEPAYRRKPNPI).

Belongs to the TMEM198 family.

The protein localises to the membrane. In Danio rerio (Zebrafish), this protein is Transmembrane protein 198 (tmem198ab).